The following is a 528-amino-acid chain: Protein arginine N-methyltransferase 3 (528 aa).

The segment at 1-42 is disordered; sequence MCSLAAGNGQGAELGPEPLELSDSGDDAGWEDEDADAEPAQG. Cysteine 2 carries the post-translational modification N-acetylcysteine. Phosphoserine occurs at positions 22 and 24. Positions 23–37 are enriched in acidic residues; sequence DSGDDAGWEDEDADA. A C2H2-type zinc finger spans residues 46–69; the sequence is TPCLFCDRLFRSAEETFSHCKLEH. A Phosphoserine modification is found at serine 169. The interval 184–528 is mediates interaction with ALDH1A1; sequence MKQFAQDFVM…NSSTQTYSLQ (345 aa). The region spanning 214–528 is the SAM-dependent MTase PRMT-type domain; the sequence is DGVYFSSYGH…NSSTQTYSLQ (315 aa). 6 residues coordinate S-adenosyl-L-homocysteine: arginine 236, glycine 260, aspartate 282, serine 284, isoleucine 310, and glutamate 311. Active-site residues include glutamate 326 and glutamate 335.

It belongs to the class I-like SAM-binding methyltransferase superfamily. Protein arginine N-methyltransferase family. Monomer and homodimer. Interacts with EPB41L3 (via FERM domain); the interaction is direct and inhibits the protein-arginine N-methyltransferase activity of PRMT3. Interacts with the 40S ribosomal protein RPS2. Interacts with ALDH1A1; the interaction is direct, inhibits ALDH1A1 aldehyde dehydrogenase activity and is independent of the methyltransferase activity of PRMT3. Ubiquitously expressed.

It localises to the cytoplasm. It is found in the cytosol. The protein localises to the nucleus. The enzyme catalyses L-arginyl-[protein] + S-adenosyl-L-methionine = N(omega)-methyl-L-arginyl-[protein] + S-adenosyl-L-homocysteine + H(+). The catalysed reaction is L-arginyl-[protein] + 2 S-adenosyl-L-methionine = N(omega),N(omega)-dimethyl-L-arginyl-[protein] + 2 S-adenosyl-L-homocysteine + 2 H(+). Inhibited by N-ethylmaleimide and high concentrations of zinc chloride. Protein-arginine N-methyltransferase that catalyzes both the monomethylation and asymmetric dimethylation of the guanidino nitrogens of arginine residues in target proteins, and therefore falls into the group of type I methyltransferases. Catalyzes the asymmetric arginine dimethylation at multiple sites in the Arg/Gly-rich region of small ribosomal subunit protein uS5/RPS2. Also appears to methylate other ribosomal proteins. May regulate retinoic acid synthesis and signaling by inhibiting ALDH1A1 retinal dehydrogenase activity. Contributes to methylation of histone H4 'Arg-3', a specific tag for epigenetic transcriptional activation. Promotes osteogenesis. This chain is Protein arginine N-methyltransferase 3, found in Rattus norvegicus (Rat).